The sequence spans 877 residues: Kinetochore null protein 2 (877 aa).

The region spanning Ile20–Asp107 is the SANTA domain. Disordered stretches follow at residues Arg122–Val315, Phe338–Asn535, and Met549–Ile604. A coiled-coil region spans residues Gln153–Ala211. The span at Ser156–Glu199 shows a compositional bias: basic and acidic residues. Residues Ile251–Ser279 show a composition bias toward polar residues. Composition is skewed to basic and acidic residues over residues Glu359–Arg385, Arg394–Asp444, and Val453–Arg480. The stretch at Glu491 to Met549 forms a coiled coil. Positions Gln511 to Ser520 are enriched in low complexity. The segment covering Arg573 to Pro583 has biased composition (polar residues). Positions Ala592–Asn601 are enriched in basic and acidic residues. Residues Val617–Pro678 enclose the Myb-like domain. Disordered regions lie at residues Arg757–Pro785 and Met808–Tyr877. 2 stretches are compositionally biased toward polar residues: residues Ser775 to Pro785 and Ser819 to Ser836. Acidic residues predominate over residues Glu856–Glu871.

Belongs to the KNL2 family. As to quaternary structure, interacts with hcp-3.

The protein localises to the nucleus. Its subcellular location is the chromosome. It is found in the centromere. It localises to the kinetochore. Its function is as follows. Required for the recruitment of hcp-3, hcp-4, knl-1, bub-1 and lin-53 to kinetochores, kinetochore assembly, chromosome condensation and chromosome segregation in meiosis and mitosis. This Caenorhabditis elegans protein is Kinetochore null protein 2.